The primary structure comprises 856 residues: Leucine--tRNA ligase (856 aa).

Positions Pro53–His63 match the 'HIGH' region motif. The 'KMSKS' region motif lies at Lys622–Ser626. Residue Lys625 participates in ATP binding.

Belongs to the class-I aminoacyl-tRNA synthetase family.

It is found in the cytoplasm. The catalysed reaction is tRNA(Leu) + L-leucine + ATP = L-leucyl-tRNA(Leu) + AMP + diphosphate. In Prochlorococcus marinus (strain MIT 9312), this protein is Leucine--tRNA ligase.